Consider the following 171-residue polypeptide: Lipoprotein signal peptidase (171 aa).

The next 3 helical transmembrane spans lie at 7–27 (GLLA…GLYF), 64–84 (IGRW…GLWM), and 88–108 (TSRL…GNAI). Residues Asp-118 and Asp-136 contribute to the active site. Residues 128 to 148 (SWYVFNVADAAIVAGVIGLIL) form a helical membrane-spanning segment.

Belongs to the peptidase A8 family.

It is found in the cell inner membrane. It carries out the reaction Release of signal peptides from bacterial membrane prolipoproteins. Hydrolyzes -Xaa-Yaa-Zaa-|-(S,diacylglyceryl)Cys-, in which Xaa is hydrophobic (preferably Leu), and Yaa (Ala or Ser) and Zaa (Gly or Ala) have small, neutral side chains.. Its pathway is protein modification; lipoprotein biosynthesis (signal peptide cleavage). This protein specifically catalyzes the removal of signal peptides from prolipoproteins. The chain is Lipoprotein signal peptidase from Methylobacterium radiotolerans (strain ATCC 27329 / DSM 1819 / JCM 2831 / NBRC 15690 / NCIMB 10815 / 0-1).